A 312-amino-acid chain; its full sequence is Pantothenate kinase (312 aa).

Residue 97–104 participates in ATP binding; that stretch reads GSVAVGKS.

The protein belongs to the prokaryotic pantothenate kinase family.

The protein resides in the cytoplasm. The enzyme catalyses (R)-pantothenate + ATP = (R)-4'-phosphopantothenate + ADP + H(+). It functions in the pathway cofactor biosynthesis; coenzyme A biosynthesis; CoA from (R)-pantothenate: step 1/5. The polypeptide is Pantothenate kinase (Mycolicibacterium smegmatis (strain ATCC 700084 / mc(2)155) (Mycobacterium smegmatis)).